Consider the following 173-residue polypeptide: Tumor necrosis factor ligand superfamily member 18 (173 aa).

At 1 to 20 the chain is on the cytoplasmic side; that stretch reads MEEMPLRESSPQRAERCKKS. Residues 21–41 form a helical; Signal-anchor for type II membrane protein membrane-spanning segment; sequence WLLCIVALLLMLLCSLGTLIY. In terms of domain architecture, THD spans 40 to 166; it reads IYTSLKPTAI…TNTYWGIILM (127 aa). Residues 42-173 are Extracellular-facing; that stretch reads TSLKPTAIES…ILMPDLPFIS (132 aa). An intrachain disulfide couples cysteine 52 to cysteine 72. Asparagine 74 carries N-linked (GlcNAc...) asparagine glycosylation.

The protein belongs to the tumor necrosis factor family. As to quaternary structure, homotrimer. Homodimer. N-glycosylated. Detected in immature and mature dendritic cells and in macrophages (at protein level). Detected in spleen, lung, heart, thymus, monocytes, macrophages, B-cells and dendritic cells.

The protein resides in the cell membrane. Functionally, cytokine that binds to TNFRSF18/AITR/GITR. Regulates T-cell responses. Can function as costimulator and lower the threshold for T-cell activation and T-cell proliferation. Important for interactions between activated T-lymphocytes and endothelial cells. Mediates activation of NF-kappa-B. Triggers increased phosphorylation of STAT1 and up-regulates expression of VCAM1 and ICAM1. Promotes leukocyte adhesion to endothelial cells. Regulates migration of monocytes from the splenic reservoir to sites of inflammation. This Mus musculus (Mouse) protein is Tumor necrosis factor ligand superfamily member 18 (Tnfsf18).